The sequence spans 147 residues: Putative cystatin-9-like protein CST9LP1 (147 aa).

The first 28 residues, 1 to 28 (MWSLPPSRALSCAPLLLLFSFQFLVTYA), serve as a signal peptide directing secretion. Cys-98 and Cys-108 form a disulfide bridge. Residues Asn-117 and Asn-139 are each glycosylated (N-linked (GlcNAc...) asparagine). A disulfide bridge links Cys-122 with Cys-142.

It belongs to the cystatin family.

The protein localises to the secreted. The chain is Putative cystatin-9-like protein CST9LP1 (CST9LP1) from Homo sapiens (Human).